We begin with the raw amino-acid sequence, 622 residues long: Solute carrier family 2, facilitated glucose transporter member 12 (622 aa).

The tract at residues 1–26 (MVPVENTEGPNLLNQKGREAETEGSC) is disordered. Over 1–44 (MVPVENTEGPNLLNQKGREAETEGSCGASGGGHPACAGGPSMFT) the chain is Cytoplasmic. Residues 45 to 65 (FLTSVTAAISGLLVGYELGLI) form a helical membrane-spanning segment. At 66-84 (SGALLQIRTLLALTCHEQE) the chain is on the extracellular side. The helical transmembrane segment at 85–105 (MVVSSLLIGAFLASLTGGVLI) threads the bilayer. The Cytoplasmic segment spans residues 106–111 (DRYGRR). A helical transmembrane segment spans residues 112 to 132 (LAIILSSCLLGLGSLVLIMSL). Residues 133–141 (SYTLLIMGR) lie on the Extracellular side of the membrane. A helical membrane pass occupies residues 142–162 (VAIGVSISLSSIATCVYIAEI). Residues 163–168 (APQHRR) lie on the Cytoplasmic side of the membrane. Residues 169–189 (GLLVSLNELMIVTGILFAYIS) traverse the membrane as a helical segment. Over 190-201 (NYAFANISNGWK) the chain is Extracellular. An N-linked (GlcNAc...) asparagine glycan is attached at N195. A helical membrane pass occupies residues 202 to 222 (YMFGLVIPLGVLQAIAMYFLP). The Cytoplasmic portion of the chain corresponds to 223–282 (PSPRFLVMKGQEESAGKVLRKLRVISDTTEELTLIKSSLKDEYQYSFWDLFRSKDNMRTR). A helical transmembrane segment spans residues 283–303 (ILIGLTLVFFVQTTGQPNILF). Topologically, residues 304 to 321 (YASTVLKSVGFQSNEAAS) are extracellular. A helical membrane pass occupies residues 322–342 (LASTGVGVVKVVSTIPATLLV). The Cytoplasmic portion of the chain corresponds to 343–349 (DHIGSKT). Residues 350 to 370 (FLCIGSSVMSASLLTMGIVNL) form a helical membrane-spanning segment. Residues 371–471 (NINMNFTNIC…PAAYKWLSLA (101 aa)) are Extracellular-facing. N-linked (GlcNAc...) asparagine glycans are attached at residues N375, N387, N400, and N405. The helical transmembrane segment at 472–492 (SLLVYVAAFSIGLGPMPWLVL) threads the bilayer. Residues 493–503 (SEIFPGGIRGR) are Cytoplasmic-facing. A helical membrane pass occupies residues 504-524 (AMALTSSMNWGVNLLISLTFL). Over 525-533 (TVTDLIGLS) the chain is Extracellular. The chain crosses the membrane as a helical span at residues 534 to 554 (WVCFIYTIMSLASLAFVVLFI). The Cytoplasmic portion of the chain corresponds to 555-622 (PETKGCSLEQ…GQSQRPSPDT (68 aa)).

It belongs to the major facilitator superfamily. Sugar transporter (TC 2.A.1.1) family. Glucose transporter subfamily. In terms of tissue distribution, expressed in skeletal muscle, heart, brain, kidney, spleen, adipose tissues and to a lesser extent in small intestine and lung.

Its subcellular location is the cell membrane. It is found in the endomembrane system. The protein localises to the cytoplasm. It localises to the perinuclear region. The catalysed reaction is D-glucose(out) = D-glucose(in). In terms of biological role, insulin-independent facilitative glucose transporter. The polypeptide is Solute carrier family 2, facilitated glucose transporter member 12 (Mus musculus (Mouse)).